We begin with the raw amino-acid sequence, 370 residues long: Pyruvate dehydrogenase E1 component subunit alpha (370 aa).

In terms of assembly, heterodimer of an alpha and a beta chain. It depends on thiamine diphosphate as a cofactor.

The catalysed reaction is N(6)-[(R)-lipoyl]-L-lysyl-[protein] + pyruvate + H(+) = N(6)-[(R)-S(8)-acetyldihydrolipoyl]-L-lysyl-[protein] + CO2. Its function is as follows. The pyruvate dehydrogenase complex catalyzes the overall conversion of pyruvate to acetyl-CoA and CO(2). It contains multiple copies of three enzymatic components: pyruvate dehydrogenase (E1), dihydrolipoamide acetyltransferase (E2) and lipoamide dehydrogenase (E3). In Staphylococcus epidermidis (strain ATCC 35984 / DSM 28319 / BCRC 17069 / CCUG 31568 / BM 3577 / RP62A), this protein is Pyruvate dehydrogenase E1 component subunit alpha (pdhA).